A 1521-amino-acid chain; its full sequence is uncharacterized protein (1521 aa).

5 disordered regions span residues 1–20 (MENN…NSNN), 85–124 (TFQS…NNNN), 218–254 (ASSP…SSSS), 431–482 (VLNS…TGIT), and 735–797 (NNNN…HQQQ). 3 stretches are compositionally biased toward low complexity: residues 94-108 (NTSS…QNNP), 219-254 (SSPS…SSSS), and 431-454 (VLNS…NNTS). Residues 455-464 (PAIVTSASIH) show a composition bias toward polar residues. Composition is skewed to low complexity over residues 465-482 (NSNG…TGIT) and 735-762 (NNNN…NNIL). Positions 763 to 774 (SNTLTSSLINEP) are enriched in polar residues. The span at 775–788 (NQQHQHQQHQQQNQ) shows a compositional bias: low complexity. The stretch at 853 to 903 (IVNSQQQQQQQQQQQQQQQQQQQQQQQQQQQQQQQQQQQQQQHNNTQNINN) forms a coiled coil. The segment covering 1398 to 1453 (QQPLPTSKTSSSSSSTSSEATPYLSSSVPPSIVTSTPSTTPMISSSNPNTSSLPTS) has biased composition (low complexity). The tract at residues 1398–1455 (QQPLPTSKTSSSSSSTSSEATPYLSSSVPPSIVTSTPSTTPMISSSNPNTSSLPTSER) is disordered.

This is an uncharacterized protein from Dictyostelium discoideum (Social amoeba).